The sequence spans 297 residues: Probable transcription factor vicR (297 aa).

Disordered stretches follow at residues 45–80 and 100–134; these read LPGLDSQASPQSGQKEEMRRKNAEAQMQNDSNHSET and TNQAYQNHPSRSREDITNSRAERHSQTSTQPKNVH. Residues 58-67 show a composition bias toward basic and acidic residues; that stretch reads QKEEMRRKNA. A compositionally biased stretch (polar residues) spans 69–80; the sequence is AQMQNDSNHSET. Residues 110–124 show a composition bias toward basic and acidic residues; sequence RSREDITNSRAERHS.

It is found in the nucleus. In terms of biological role, probable transcription factor; part of the gene cluster that mediates the biosynthesis of the secondary metabolite victorin, the molecular basis for Victoria blight of oats. May play a role in the regulation of the production of victorin. The sequence is that of Probable transcription factor vicR from Bipolaris victoriae (strain FI3) (Victoria blight of oats agent).